Consider the following 383-residue polypeptide: Protein delta homolog 1 (383 aa).

The signal sequence occupies residues 1–23 (MTATEALLRVLLLLLAFGHSTYG). EGF-like domains lie at 24-55 (AECF…PLCD), 53-86 (LCDQ…ELCD), 88-125 (DVRA…KDCQ), 127-168 (KDGP…NFCE), 170-206 (VANS…KTCS), and 208-245 (PVTN…LTCV). The Extracellular portion of the chain corresponds to 24-303 (AECFPACNPQ…KKTPLLTEGQ (280 aa)). 12 cysteine pairs are disulfide-bonded: C26–C37, C30–C43, C45–C54, C57–C68, C63–C74, C76–C85, C92–C103, C97–C113, C115–C124, C131–C144, C138–C156, and C158–C167. O-linked (GalNAc...) serine glycosylation is present at S94. N-linked (GlcNAc...) asparagine glycosylation occurs at N100. T143 carries O-linked (GalNAc...) threonine glycosylation. The O-linked (GalNAc...) serine; partial glycan is linked to S163. N-linked (GlcNAc...) asparagine; atypical; partial glycans are attached at residues N165 and N172. Cystine bridges form between C174–C185, C179–C194, C196–C205, C212–C223, C217–C233, and C235–C244. O-linked (GalNAc...) serine glycosylation is present at S214. T222 carries O-linked (GalNAc...) threonine; partial glycosylation. S251 is a glycosylation site (O-linked (GalNAc...) serine; partial). The O-linked (GalNAc...) threonine glycan is linked to T256. O-linked (GalNAc...) serine; partial glycosylation occurs at S260. A helical membrane pass occupies residues 304–327 (AICFTILGVLTSLVVLGTVGIVFL). The Cytoplasmic portion of the chain corresponds to 328 to 383 (NKCETWVSNLRYNHMLRKKKNLLLQYNSGEDLAVNIIFPEKIDMTTFSKEAGDEEI).

As to quaternary structure, monomer. Interacts with SH3RF2. Post-translationally, N- and O-glycosylated. O-glycosylated with core 1 or possibly core 8 glycans. In terms of tissue distribution, found within the stromal cells in close contact to the vascular structure of placental villi, yolk sac, fetal liver, adrenal cortex and pancreas and in the beta cells of the islets of Langerhans in the adult pancreas. Found also in some forms of neuroendocrine lung tumor tissue.

It localises to the membrane. The protein resides in the cytoplasm. Functionally, may have a role in neuroendocrine differentiation. The protein is Protein delta homolog 1 (DLK1) of Homo sapiens (Human).